A 327-amino-acid polypeptide reads, in one-letter code: Beta-ketoacyl-[acyl-carrier-protein] synthase III (327 aa).

Catalysis depends on residues cysteine 112 and histidine 253. Positions 254-258 (QANER) are ACP-binding. Asparagine 283 is an active-site residue.

Belongs to the thiolase-like superfamily. FabH family. Homodimer.

Its subcellular location is the cytoplasm. It catalyses the reaction malonyl-[ACP] + acetyl-CoA + H(+) = 3-oxobutanoyl-[ACP] + CO2 + CoA. It functions in the pathway lipid metabolism; fatty acid biosynthesis. Catalyzes the condensation reaction of fatty acid synthesis by the addition to an acyl acceptor of two carbons from malonyl-ACP. Catalyzes the first condensation reaction which initiates fatty acid synthesis and may therefore play a role in governing the total rate of fatty acid production. Possesses both acetoacetyl-ACP synthase and acetyl transacylase activities. Its substrate specificity determines the biosynthesis of branched-chain and/or straight-chain of fatty acids. The sequence is that of Beta-ketoacyl-[acyl-carrier-protein] synthase III from Chlamydia muridarum (strain MoPn / Nigg).